Consider the following 526-residue polypeptide: Putative ankyrin repeat protein R840 (526 aa).

15 ANK repeats span residues 78–107 (TLNE…NIRS), 108–137 (RDNF…DIRS), 139–167 (KNYA…NIRD), 169–197 (DNCA…DSTS), 198–227 (NFNE…RCRN), 229–255 (SAII…NIRI), 256–285 (DDDY…NIRS), 286–315 (EIDH…DIKS), 317–345 (YDRS…NIRN), 346–375 (INDY…NIRV), 376–405 (DNDS…DIRV), 406–435 (NNYQ…NVSI), 437–467 (NVPL…DINL), 468–497 (ADDM…NVRA), and 499–526 (NDYA…AILS).

This chain is Putative ankyrin repeat protein R840, found in Acanthamoeba polyphaga (Amoeba).